The primary structure comprises 515 residues: Leucine-rich repeat transmembrane neuronal protein 2 (515 aa).

The first 33 residues, 1-33, serve as a signal peptide directing secretion; sequence MGLHFKWPLGAPMLAAIYAMSVVLKMLPALGMA. Positions 34–61 constitute an LRRNT domain; it reads CPPKCRCEKLLFYCDSQGFHSVPNATDK. Topologically, residues 34 to 421 are extracellular; that stretch reads CPPKCRCEKL…EPDNAIFTQR (388 aa). Asparagine 57 is a glycosylation site (N-linked (GlcNAc...) asparagine). LRR repeat units lie at residues 63 to 83, 86 to 107, 110 to 131, 134 to 155, 158 to 179, 182 to 203, 206 to 227, 230 to 251, 254 to 275, and 278 to 299; these read SLGL…QFAS, QLTW…AFQG, KLKE…TFTQ, NLQN…LFYG, KLQT…LFWD, SLEF…GFAG, KLRE…HFLR, SLHT…MDWT, TLEK…VFET, and NLKI…ILNS. A glycan (N-linked (GlcNAc...) asparagine) is linked at asparagine 126. An N-linked (GlcNAc...) asparagine glycan is attached at asparagine 243. The 52-residue stretch at 311–362 folds into the LRRCT domain; it reads NLWECSPRVCALASWLGSFQGRWEHSILCHSPDHTQGEDILDAVHGFQLCWN. A glycan (N-linked (GlcNAc...) asparagine) is linked at asparagine 362. The chain crosses the membrane as a helical span at residues 422 to 442; that stretch reads VITGTMALLFSFFFIIFIVFI. Residues 443 to 515 lie on the Cytoplasmic side of the membrane; it reads SRKCCPPTLR…QQLPYKECEV (73 aa). An Involved in DLG4-binding motif is present at residues 512–515; it reads ECEV.

It belongs to the LRRTM family. In terms of assembly, interacts with DLG4. Interacts with neurexin NRXN1; interaction is mediated by heparan sulfate glycan modification on neurexin. As to expression, expressed in neuronal tissues.

Its subcellular location is the cell membrane. The protein resides in the postsynaptic cell membrane. Its function is as follows. Involved in the development and maintenance of excitatory synapses in the vertebrate nervous system. Regulates surface expression of AMPA receptors and instructs the development of functional glutamate release sites. Acts as a ligand for the presynaptic receptors NRXN1-A and NRXN1-B. This is Leucine-rich repeat transmembrane neuronal protein 2 (Lrrtm2) from Mus musculus (Mouse).